A 401-amino-acid polypeptide reads, in one-letter code: (1R,4R,5S)-(-)-guaia-6,10(14)-diene synthase (401 aa).

The tract at residues 1-21 (MVKFDSGSESEMTNGDDLHIN) is disordered. Mg(2+)-binding residues include Asp134 and Glu139. Positions 134–138 (DDQFD) match the DDXXD motif motif. Position 242 (Arg242) interacts with substrate. Mg(2+) is bound by residues Asn288 and Ser292. Substrate is bound at residue Lys295. A Mg(2+)-binding site is contributed by Asp296. 375–376 (RY) contributes to the substrate binding site.

It belongs to the terpene synthase family. Requires Mg(2+) as cofactor.

The catalysed reaction is (2E,6E)-farnesyl diphosphate = (1R,4R,5S)-(-)-guaia-6,10(14)-diene + diphosphate. Its pathway is secondary metabolite biosynthesis; terpenoid biosynthesis. Functionally, catalyzes the conversion of (2E,6E)-farnesyl diphosphate (FPP) to yield the bicyclic sesquiterpene guaia-6,10(14)-diene via a 1,10-cyclization, which requires the abstraction of the pyrophosphate from FPP to yield the (E,E)-germacradienyl cation. The only accepted substrate is farnesyl diphosphate (FPP). This Fusarium proliferatum (strain ET1) (Orchid endophyte fungus) protein is (1R,4R,5S)-(-)-guaia-6,10(14)-diene synthase.